Consider the following 241-residue polypeptide: Chlorophyll a-b binding protein 6, chloroplastic (241 aa).

The transit peptide at 1-35 (MASNSLMSCGIAAVYPSLLSSSKSKFVSAGVPLPN) directs the protein to the chloroplast. Residue W48 participates in chlorophyll b binding. Chlorophyll a-binding residues include F68, E87, and H90. R92 contributes to the chlorophyll b binding site. Residues 93–113 (WAMLAVPGILVPEALGYGNWV) traverse the membrane as a helical segment. Position 129 (L129) interacts with chlorophyll a. Residues 132–152 (PVPWGTLPTILAIEFLAIAFV) traverse the membrane as a helical segment. V133, E153, and R156 together coordinate chlorophyll b. Chlorophyll a-binding residues include K190, E191, N194, R196, Q208, and H224. The helical transmembrane segment at 197-217 (LALLAFVGFCVQQSAYPGTGP) threads the bilayer.

Belongs to the light-harvesting chlorophyll a/b-binding (LHC) protein family. The LHC complex consists of chlorophyll a-b binding proteins. Red-emitting heterodimer with LHCA4. Interacts with LHCA5. Requires Binds at least 14 chlorophylls (8 Chl-a and 6 Chl-b) and carotenoids such as lutein and neoxanthin. as cofactor. In terms of processing, photoregulated by reversible phosphorylation of its threonine residues.

The protein resides in the plastid. The protein localises to the chloroplast thylakoid membrane. Functionally, the light-harvesting complex (LHC) functions as a light receptor, it captures and delivers excitation energy to photosystems with which it is closely associated. The sequence is that of Chlorophyll a-b binding protein 6, chloroplastic from Arabidopsis thaliana (Mouse-ear cress).